The primary structure comprises 78 residues: Cytochrome c oxidase subunit 6b-2 (78 aa).

In terms of domain architecture, CHCH spans 22-65 (TRHCFTRYIEFHRCTTAKGEESNDCERFAKYYRALCPGEWVDKW). Residues 25–35 (CFTRYIEFHRC) carry the Cx9C motif motif. 2 disulfide bridges follow: Cys-25/Cys-57 and Cys-35/Cys-46. Positions 46–57 (CERFAKYYRALC) match the Cx10C motif motif.

Belongs to the cytochrome c oxidase subunit 6B (TC 3.D.4.8) family. As to expression, specifically expressed in roots.

The protein localises to the mitochondrion. This protein is one of the nuclear-coded polypeptide chains of cytochrome c oxidase, the terminal oxidase in mitochondrial electron transport. This protein may be one of the heme-binding subunits of the oxidase. The chain is Cytochrome c oxidase subunit 6b-2 (COX6B-2) from Arabidopsis thaliana (Mouse-ear cress).